The following is a 395-amino-acid chain: S-adenosylmethionine synthase 5 (395 aa).

Mg(2+) is bound at residue E10. H16 serves as a coordination point for ATP. E44 lines the K(+) pocket. E57 and Q100 together coordinate L-methionine. Residues D168 to K170, S236 to F239, D247, R253 to K254, A270, K274, and K278 contribute to the ATP site. L-methionine is bound at residue D247. An L-methionine-binding site is contributed by K278.

This sequence belongs to the AdoMet synthase family. Homotetramer. The cofactor is Mn(2+). Requires Mg(2+) as cofactor. It depends on Co(2+) as a cofactor. K(+) is required as a cofactor.

It is found in the cytoplasm. It carries out the reaction L-methionine + ATP + H2O = S-adenosyl-L-methionine + phosphate + diphosphate. The protein operates within amino-acid biosynthesis; S-adenosyl-L-methionine biosynthesis; S-adenosyl-L-methionine from L-methionine: step 1/1. Functionally, catalyzes the formation of S-adenosylmethionine from methionine and ATP. The reaction comprises two steps that are both catalyzed by the same enzyme: formation of S-adenosylmethionine (AdoMet) and triphosphate, and subsequent hydrolysis of the triphosphate. The chain is S-adenosylmethionine synthase 5 (METK5) from Populus trichocarpa (Western balsam poplar).